An 87-amino-acid chain; its full sequence is Cell division topological specificity factor (87 aa).

It belongs to the MinE family.

Functionally, prevents the cell division inhibition by proteins MinC and MinD at internal division sites while permitting inhibition at polar sites. This ensures cell division at the proper site by restricting the formation of a division septum at the midpoint of the long axis of the cell. This Delftia acidovorans (strain DSM 14801 / SPH-1) protein is Cell division topological specificity factor.